Reading from the N-terminus, the 341-residue chain is MAFPQRKRTPSFSSSVLDSVYRSIDESDGLQSDLKGSINENVSSSSSSPSPNKKDDKLTTLRRAIMDEEHWLYARSSTTTTNSSDSSSFSSSEAESYRTKRRLRKLAEQGKRSGDERQRTKRTVMDNDSRLFSKSDDDKKPKAVKIIEELKRSKQPVSPGARLTSFLNSIFQSNAKKVKLCSVGKTTDVKSSSSKSCFSRTRNKTDNNNNNCKKLERSIRFYPVRVTIDGDCRDYAQKHITRVRKPIPEFTAKKSVKEEIKTNDHHTEFTCITRNIGLKDFVRSNKYEGKEEEEDAWSHSSSDLFELDSYRIGMGRYLKELPVYETTDFKTNQAIARSLLL.

Disordered stretches follow at residues 28-61 (DGLQ…LTTL) and 76-138 (SSTT…SDDD). Positions 52–61 (NKKDDKLTTL) are enriched in basic and acidic residues. The segment covering 76 to 92 (SSTTTTNSSDSSSFSSS) has biased composition (low complexity). Over residues 105 to 138 (KLAEQGKRSGDERQRTKRTVMDNDSRLFSKSDDD) the composition is skewed to basic and acidic residues.

The protein belongs to the BIG GRAIN 1 (BG1) plant protein family.

It localises to the cell membrane. Its function is as follows. Involved in auxin transport. Regulator of the auxin signaling pathway. This Arabidopsis thaliana (Mouse-ear cress) protein is Protein BIG GRAIN 1-like C.